A 200-amino-acid chain; its full sequence is Small ribosomal subunit protein uS4c (200 aa).

An S4 RNA-binding domain is found at 90–150; it reads MRLDNIIFRL…NRKESVIIKN (61 aa).

This sequence belongs to the universal ribosomal protein uS4 family. As to quaternary structure, part of the 30S ribosomal subunit. Contacts protein S5. The interaction surface between S4 and S5 is involved in control of translational fidelity.

The protein localises to the plastid. It localises to the chloroplast. One of the primary rRNA binding proteins, it binds directly to 16S rRNA where it nucleates assembly of the body of the 30S subunit. In terms of biological role, with S5 and S12 plays an important role in translational accuracy. The chain is Small ribosomal subunit protein uS4c (rps4) from Pellia neesiana (Liverwort).